The primary structure comprises 216 residues: Kynurenine formamidase (216 aa).

Residue Trp-25 participates in substrate binding. Residues His-55, His-59, and Asp-61 each coordinate Zn(2+). His-65 functions as the Proton donor/acceptor in the catalytic mechanism. 2 residues coordinate Zn(2+): His-167 and Glu-179.

The protein belongs to the Cyclase 1 superfamily. KynB family. As to quaternary structure, homodimer. Requires Zn(2+) as cofactor.

The catalysed reaction is N-formyl-L-kynurenine + H2O = L-kynurenine + formate + H(+). Its pathway is amino-acid degradation; L-tryptophan degradation via kynurenine pathway; L-kynurenine from L-tryptophan: step 2/2. Its function is as follows. Catalyzes the hydrolysis of N-formyl-L-kynurenine to L-kynurenine, the second step in the kynurenine pathway of tryptophan degradation. The protein is Kynurenine formamidase of Cupriavidus taiwanensis (strain DSM 17343 / BCRC 17206 / CCUG 44338 / CIP 107171 / LMG 19424 / R1) (Ralstonia taiwanensis (strain LMG 19424)).